Here is a 60-residue protein sequence, read N- to C-terminus: Cytotoxin 2 (60 aa).

4 disulfide bridges follow: Cys3/Cys21, Cys14/Cys38, Cys42/Cys53, and Cys54/Cys59.

This sequence belongs to the three-finger toxin family. Short-chain subfamily. Type IA cytotoxin sub-subfamily. In terms of assembly, monomer in solution; Homodimer and oligomer in the presence of negatively charged lipids forming a pore with a size ranging between 20 and 30 Angstroms. In terms of tissue distribution, expressed by the venom gland.

The protein localises to the secreted. Its subcellular location is the target cell membrane. Its function is as follows. Shows cytolytic activity on many different cells by forming pore in lipid membranes. In vivo, increases heart rate or kills the animal by cardiac arrest. In addition, it binds to heparin with high affinity, interacts with Kv channel-interacting protein 1 (KCNIP1) in a calcium-independent manner, and binds to integrin alpha-V/beta-3 (ITGAV/ITGB3) with moderate affinity. This Naja nivea (Cape cobra) protein is Cytotoxin 2.